Consider the following 338-residue polypeptide: Lipoate-protein ligase A (338 aa).

The region spanning 29 to 216 (PATQRVLFLW…AFFEHYSERV (188 aa)) is the BPL/LPL catalytic domain. Residues Arg-71, 76–79 (GAVF), and Lys-134 each bind ATP. Lys-134 serves as a coordination point for (R)-lipoate.

The protein belongs to the LplA family. As to quaternary structure, monomer.

Its subcellular location is the cytoplasm. It carries out the reaction L-lysyl-[lipoyl-carrier protein] + (R)-lipoate + ATP = N(6)-[(R)-lipoyl]-L-lysyl-[lipoyl-carrier protein] + AMP + diphosphate + H(+). It participates in protein modification; protein lipoylation via exogenous pathway; protein N(6)-(lipoyl)lysine from lipoate: step 1/2. The protein operates within protein modification; protein lipoylation via exogenous pathway; protein N(6)-(lipoyl)lysine from lipoate: step 2/2. Functionally, catalyzes both the ATP-dependent activation of exogenously supplied lipoate to lipoyl-AMP and the transfer of the activated lipoyl onto the lipoyl domains of lipoate-dependent enzymes. In Enterobacter sp. (strain 638), this protein is Lipoate-protein ligase A.